The primary structure comprises 224 residues: Endonuclease NucS (224 aa).

The protein belongs to the NucS endonuclease family.

Its subcellular location is the cytoplasm. Cleaves both 3' and 5' ssDNA extremities of branched DNA structures. This chain is Endonuclease NucS, found in Mycolicibacterium smegmatis (strain ATCC 700084 / mc(2)155) (Mycobacterium smegmatis).